We begin with the raw amino-acid sequence, 422 residues long: F-box protein At3g12350 (422 aa).

In terms of domain architecture, F-box spans 5–52; that stretch reads ALPFCEIPEDLQLRILSLLTPAEISSFACTSKRFASLCQEDGKIWHVM. Basic and acidic residues-rich tracts occupy residues 197–207 and 242–252; these read NNRREDQRSSG and KEKERQASRTK. 2 disordered regions span residues 197–216 and 226–252; these read NNRR…LISS and LANK…SRTK.

The sequence is that of F-box protein At3g12350 from Arabidopsis thaliana (Mouse-ear cress).